The chain runs to 272 residues: Putative phosphatase HI_0597 (272 aa).

Residue Asp11 is the Nucleophile of the active site. Asp11 serves as a coordination point for Mg(2+). Leu12 provides a ligand contact to phosphate. Asp13 provides a ligand contact to Mg(2+). Phosphate-binding positions include 45–46 and Lys195; that span reads TG. Residue Asp218 coordinates Mg(2+). Asn221 contributes to the phosphate binding site.

Belongs to the HAD-like hydrolase superfamily. Cof family. Requires Mg(2+) as cofactor.

The sequence is that of Putative phosphatase HI_0597 from Haemophilus influenzae (strain ATCC 51907 / DSM 11121 / KW20 / Rd).